Here is a 695-residue protein sequence, read N- to C-terminus: C6 finger domain transcription factor nscR (695 aa).

Residues 17 to 43 constitute a DNA-binding region (zn(2)-C6 fungal-type); sequence CELCRERKVKCDKLDPCTNCASAGVVC. Positions 101–113 are enriched in low complexity; it reads SMRSSASQSSNQD. The segment at 101–146 is disordered; the sequence is SMRSSASQSSNQDQESRDAIESISNETEDASAPTPDSSRMPLGDGG.

The protein localises to the nucleus. Transcription factor that specifically regulates the neosartoricin B biosynthesis gene cluster. The polypeptide is C6 finger domain transcription factor nscR (Arthroderma otae (strain ATCC MYA-4605 / CBS 113480) (Microsporum canis)).